Reading from the N-terminus, the 307-residue chain is MAGRSGRTFPRVAVLMGGTSSEREVSLSSGHSCSAALRDAGYEVTEVDAGPDLARVLAEVQPDAVFNALHGRWGEDGCVQGLLEWLRIPYTHSGVLASALAMDKARAKEVFAAAGLPVTQSVIATPDEVQAGHVLPPPYVVKPNCEGSSVGVYIVQADANGPPRLAPDMPRDLMVETYIPGRELTVTVMGDRALAVTDIVTDGWYDYDAKYRPGGSRHVVPAELPAEITDACLDIALRAHRALGCRGISRSDLRWDESRGAEGLILLETNTQPGMTPTSLSPEQAAHCGLSFPEFCAWMVEDASCNR.

The ATP-grasp domain occupies 108–301 (KEVFAAAGLP…FPEFCAWMVE (194 aa)). ATP is bound at residue 135-185 (LPPPYVVKPNCEGSSVGVYIVQADANGPPRLAPDMPRDLMVETYIPGRELT). Mg(2+) is bound by residues Asp-252, Glu-268, and Asn-270.

Belongs to the D-alanine--D-alanine ligase family. The cofactor is Mg(2+). Requires Mn(2+) as cofactor.

Its subcellular location is the cytoplasm. It carries out the reaction 2 D-alanine + ATP = D-alanyl-D-alanine + ADP + phosphate + H(+). The protein operates within cell wall biogenesis; peptidoglycan biosynthesis. Cell wall formation. The polypeptide is D-alanine--D-alanine ligase (Cereibacter sphaeroides (strain ATCC 17025 / ATH 2.4.3) (Rhodobacter sphaeroides)).